The primary structure comprises 61 residues: Photosystem II reaction center protein K (61 aa).

The propeptide occupies 1-24 (MLNIFSLICICLHSTLYSSSFFLA). The helical transmembrane segment at 36-56 (IVDFMPVIPLLFFLLAFVWQA) threads the bilayer.

This sequence belongs to the PsbK family. In terms of assembly, PSII is composed of 1 copy each of membrane proteins PsbA, PsbB, PsbC, PsbD, PsbE, PsbF, PsbH, PsbI, PsbJ, PsbK, PsbL, PsbM, PsbT, PsbX, PsbY, PsbZ, Psb30/Ycf12, at least 3 peripheral proteins of the oxygen-evolving complex and a large number of cofactors. It forms dimeric complexes.

The protein localises to the plastid. Its subcellular location is the chloroplast thylakoid membrane. Its function is as follows. One of the components of the core complex of photosystem II (PSII). PSII is a light-driven water:plastoquinone oxidoreductase that uses light energy to abstract electrons from H(2)O, generating O(2) and a proton gradient subsequently used for ATP formation. It consists of a core antenna complex that captures photons, and an electron transfer chain that converts photonic excitation into a charge separation. This is Photosystem II reaction center protein K from Eucalyptus globulus subsp. globulus (Tasmanian blue gum).